Reading from the N-terminus, the 299-residue chain is uncharacterized protein (299 aa).

Active-site charge relay system residues include Thr-47 and Tyr-109. Catalysis depends on Tyr-138, which acts as the Proton donor. The active-site Schiff-base intermediate with substrate is Lys-168.

It belongs to the DapA family. In terms of assembly, homotetramer.

The protein localises to the cytoplasm. This is an uncharacterized protein from Chloroflexus aurantiacus (strain ATCC 29366 / DSM 635 / J-10-fl).